Consider the following 1240-residue polypeptide: Structural polyprotein (1240 aa).

The segment at 1–35 (MFPYPTLNYPPMAPINPMAYRDPNPPRQVAPFRPP) is necessary for nucleocapsid assembly and virus assembly. A disordered region spans residues 1–102 (MFPYPTLNYP…RKPKPGKRQR (102 aa)). Pro residues predominate over residues 23–34 (PNPPRQVAPFRP). Positions 36–69 (LAAQIEDLRRSIANLTLKQRAPNPPAGPPAKRKK) are host transcription inhibition. The Supraphysiological nuclear export signal motif lies at 43–50 (LRRSIANL). N-linked (GlcNAc...) asparagine; by host glycosylation occurs at Asn49. Residues 65–102 (AKRKKPAPKPKPAQAKKKRPPPPAKKQKRKPKPGKRQR) are compositionally biased toward basic residues. Positions 66–70 (KRKKP) match the Nuclear localization signal motif. The tract at residues 82–112 (KRPPPPAKKQKRKPKPGKRQRMCMKLESDKT) is binding to the viral RNA. The segment at 97 to 111 (PGKRQRMCMKLESDK) is ribosome-binding. Ser109 is modified (phosphoserine). The 150-residue stretch at 111 to 260 (KTFPIMLNGQ…KDTPEGSEPW (150 aa)) folds into the Peptidase S3 domain. Thr112 carries the phosphothreonine modification. Active-site charge relay system residues include His137, Asp159, and Ser211. Positions 261 to 272 (SLATVMCVLANI) are functions as an uncleaved signal peptide for the precursor of protein E3/E2. Residues 261–682 (SLATVMCVLA…HEVVVYYYNR (422 aa)) lie on the Extracellular side of the membrane. Residues Asn271 and Asn638 are each glycosylated (N-linked (GlcNAc...) asparagine; by host). The chain crosses the membrane as a helical span at residues 683–703 (YPLTTIIGLCTCVAIIMVSCV). Over 704–743 (HPCGSFAGLRNLCITPYKLAPNAQVPILLALLCCIKPTRA) the chain is Cytoplasmic. S-palmitoyl cysteine; by host attachment occurs at residues Cys706, Cys716, Cys736, and Cys737. The tract at residues 715–735 (LCITPYKLAPNAQVPILLALL) is transient transmembrane before p62-6K protein processing. Over 744-758 (DDTLQVLNYLWNNNQ) the chain is Extracellular. A helical transmembrane segment spans residues 759–779 (NFFWMQTLIPLAALIVCMRIV). A topological domain (cytoplasmic) is located at residue Arg780. Residues 781–801 (CLFCCGPAFLLVCGAWAAAYE) form a helical membrane-spanning segment. The Extracellular portion of the chain corresponds to 802 to 1216 (HTAVMPNKVG…WSWLKVLVGG (415 aa)). Asn834 carries an N-linked (GlcNAc...) asparagine; by host glycan. Cystine bridges form between Cys848-Cys913, Cys861-Cys893, Cys862-Cys895, and Cys867-Cys877. The E1 fusion peptide loop stretch occupies residues 883–900 (VYPFMWGGAYCFCDTENT). Residue Asn933 is glycosylated (N-linked (GlcNAc...) asparagine; by host). Disulfide bonds link Cys1059-Cys1071, Cys1101-Cys1176, and Cys1106-Cys1180. Residues 1217 to 1237 (TSAFIVLGLIATAVVALVLFF) traverse the membrane as a helical segment. Residues 1238–1240 (HRH) lie on the Cytoplasmic side of the membrane.

As to quaternary structure, part of a tetrameric complex composed of host CRM1, host importin alpha/beta dimer and the viral capsid; this complex blocks the receptor-mediated transport through the nuclear pore. Interacts with host phosphatase PPP1CA; this interaction dephosphorylates the capsid protein, which increases its ability to bind to the viral genome. Interacts with host karyopherin KPNA4; this interaction allows the nuclear import of the viral capsid protein. Interacts with spike glycoprotein E2. Interacts with host IRAK1; the interaction leads to inhibition of IRAK1-dependent signaling. The precursor of protein E3/E2 and E1 form a heterodimer shortly after synthesis. In terms of assembly, the precursor of protein E3/E2 and E1 form a heterodimer shortly after synthesis. Processing of the precursor of protein E3/E2 into E2 and E3 results in a heterodimer of the spike glycoproteins E2 and E1. Spike at virion surface are constituted of three E2-E1 heterodimers. After target cell attachment and endocytosis, E1 change conformation to form homotrimers. Interacts with 6K protein. As to quaternary structure, processing of the precursor of protein E3/E2 into E2 and E3 results in a heterodimer of the spike glycoproteins E2 and E1. Spike at virion surface are constituted of three E2-E1 heterodimers. Interacts with 6K protein. Interacts with spike glycoprotein E1. Interacts with spike glycoprotein E2. Structural polyprotein: Specific enzymatic cleavages in vivo yield mature proteins. Capsid protein is auto-cleaved during polyprotein translation, unmasking a signal peptide at the N-terminus of the precursor of E3/E2. The remaining polyprotein is then targeted to the host endoplasmic reticulum, where host signal peptidase cleaves it into pE2, 6K and E1 proteins. pE2 is further processed to mature E3 and E2 by host furin in trans-Golgi vesicle. Post-translationally, phosphorylated on serine and threonine residues. In terms of processing, palmitoylated via thioester bonds. These palmitoylations may induce disruption of the C-terminus transmembrane. This would result in the reorientation of E2 C-terminus from lumenal to cytoplasmic side. N-glycosylated. Post-translationally, palmitoylated via thioester bonds.

It localises to the virion. The protein localises to the host cytoplasm. The protein resides in the host cell membrane. It is found in the host nucleus. Its subcellular location is the virion membrane. It catalyses the reaction Autocatalytic release of the core protein from the N-terminus of the togavirus structural polyprotein by hydrolysis of a -Trp-|-Ser- bond.. Functionally, forms an icosahedral capsid with a T=4 symmetry composed of 240 copies of the capsid protein surrounded by a lipid membrane through which penetrate 80 spikes composed of trimers of E1-E2 heterodimers. The capsid protein binds to the viral RNA genome at a site adjacent to a ribosome binding site for viral genome translation following genome release. Possesses a protease activity that results in its autocatalytic cleavage from the nascent structural protein. Following its self-cleavage, the capsid protein transiently associates with ribosomes, and within several minutes the protein binds to viral RNA and rapidly assembles into icosahedric core particles. The resulting nucleocapsid eventually associates with the cytoplasmic domain of the spike glycoprotein E2 at the cell membrane, leading to budding and formation of mature virions. In case of infection, new virions attach to target cells and after clathrin-mediated endocytosis their membrane fuses with the host endosomal membrane. This leads to the release of the nucleocapsid into the cytoplasm, followed by an uncoating event necessary for the genomic RNA to become accessible. The uncoating might be triggered by the interaction of capsid proteins with ribosomes. Binding of ribosomes would release the genomic RNA since the same region is genomic RNA-binding and ribosome-binding. Specifically inhibits interleukin-1 receptor-associated kinase 1/IRAK1-dependent signaling during viral entry, representing a means by which the alphaviruses may evade innate immune detection and activation prior to viral gene expression. Inhibits host transcription. Forms a tetrameric complex with XPO1/CRM1 and the nuclear import receptor importin. This complex blocks the central channel of host nuclear pores thereby inhibiting the receptor-mediated nuclear transport and thus the host mRNA and rRNA transcription. The inhibition of transcription is linked to a cytopathic effect on the host cell. Its function is as follows. Provides the signal sequence for the translocation of the precursor of protein E3/E2 to the host endoplasmic reticulum. Furin-cleaved E3 remains associated with spike glycoprotein E1 and mediates pH protection of the latter during the transport via the secretory pathway. After virion release from the host cell, the assembly protein E3 is gradually released in the extracellular space. In terms of biological role, plays a role in viral attachment to target host cell, by binding to the cell receptor. Synthesized as a p62 precursor which is processed by furin at the cell membrane just before virion budding, giving rise to E2-E1 heterodimer. The p62-E1 heterodimer is stable, whereas E2-E1 is unstable and dissociate at low pH. p62 is processed at the last step, presumably to avoid E1 fusion activation before its final export to cell surface. E2 C-terminus contains a transitory transmembrane that would be disrupted by palmitoylation, resulting in reorientation of the C-terminal tail from lumenal to cytoplasmic side. This step is critical since E2 C-terminus is involved in budding by interacting with capsid proteins. This release of E2 C-terminus in cytoplasm occurs lately in protein export, and precludes premature assembly of particles at the endoplasmic reticulum membrane. Constitutive membrane protein involved in virus glycoprotein processing, cell permeabilization, and the budding of viral particles. Disrupts the calcium homeostasis of the cell, probably at the endoplasmic reticulum level. This leads to cytoplasmic calcium elevation. Because of its lipophilic properties, the 6K protein is postulated to influence the selection of lipids that interact with the transmembrane domains of the glycoproteins, which, in turn, affects the deformability of the bilayer required for the extreme curvature that occurs as budding proceeds. Present in low amount in virions, about 3% compared to viral glycoproteins. Functionally, class II viral fusion protein. Fusion activity is inactive as long as E1 is bound to E2 in mature virion. After virus attachment to target cell and endocytosis, acidification of the endosome would induce dissociation of E1/E2 heterodimer and concomitant trimerization of the E1 subunits. This E1 trimer is fusion active, and promotes release of viral nucleocapsid in cytoplasm after endosome and viral membrane fusion. Efficient fusion requires the presence of cholesterol and sphingolipid in the target membrane. Fusion is optimal at levels of about 1 molecule of cholesterol per 2 molecules of phospholipids, and is specific for sterols containing a 3-beta-hydroxyl group. This is Structural polyprotein from Eastern equine encephalitis virus (strain va33[ten broeck]) (EEEV).